The primary structure comprises 462 residues: Argininosuccinate lyase (462 aa).

The protein belongs to the lyase 1 family. Argininosuccinate lyase subfamily.

Its subcellular location is the cytoplasm. It carries out the reaction 2-(N(omega)-L-arginino)succinate = fumarate + L-arginine. It participates in amino-acid biosynthesis; L-arginine biosynthesis; L-arginine from L-ornithine and carbamoyl phosphate: step 3/3. The protein is Argininosuccinate lyase of Thermus thermophilus (strain ATCC BAA-163 / DSM 7039 / HB27).